The sequence spans 340 residues: MYSIRLDALAQQLDAQLHGDGDIVITGVASMHSAKTGQITFLSDSRYREQLAETQASAVVLTEADLPYCQVAALVVKNPYLTYAHMAQLLDTTPQPATDIAPSAVIASDATLGQQVSIGANAVIESGAQLGDGVVIGPGCFVGKNARIGAGTRLWANVTIYHRVELGEHCLIQSGTVIGSDGFGYANDRGNWVKIPQLGTVRIGDQVEIGASTTIDRGALDDTVIGNGVIIDNQCQIAHNVVIGDNTAVAGGVIMAGSLKIGRYCMIGGASVINGHMEICDKVTVTGMGMVMRPITEPGVYSSGIPLQPNKVWRKTAALVMNIDEISKRLKAVERKVDNV.

The active-site Proton acceptor is H239.

The protein belongs to the transferase hexapeptide repeat family. LpxD subfamily. Homotrimer.

It carries out the reaction a UDP-3-O-[(3R)-3-hydroxyacyl]-alpha-D-glucosamine + a (3R)-hydroxyacyl-[ACP] = a UDP-2-N,3-O-bis[(3R)-3-hydroxyacyl]-alpha-D-glucosamine + holo-[ACP] + H(+). The catalysed reaction is UDP-3-O-[(3R)-3-hydroxytetradecanoyl]-alpha-D-glucosamine + (3R)-hydroxytetradecanoyl-[ACP] = UDP-2-N,3-O-bis[(3R)-3-hydroxytetradecanoyl]-alpha-D-glucosamine + holo-[ACP] + H(+). The protein operates within glycolipid biosynthesis; lipid IV(A) biosynthesis; lipid IV(A) from (3R)-3-hydroxytetradecanoyl-[acyl-carrier-protein] and UDP-N-acetyl-alpha-D-glucosamine: step 3/6. Catalyzes the N-acylation of UDP-3-O-(hydroxytetradecanoyl)glucosamine using 3-hydroxytetradecanoyl-ACP as the acyl donor. Is involved in the biosynthesis of lipid A, a phosphorylated glycolipid that anchors the lipopolysaccharide to the outer membrane of the cell. The sequence is that of UDP-3-O-(3-hydroxymyristoyl)glucosamine N-acyltransferase from Pectobacterium atrosepticum (strain SCRI 1043 / ATCC BAA-672) (Erwinia carotovora subsp. atroseptica).